We begin with the raw amino-acid sequence, 180 residues long: Large ribosomal subunit protein uL5 (180 aa).

This sequence belongs to the universal ribosomal protein uL5 family. Part of the 50S ribosomal subunit; part of the 5S rRNA/L5/L18/L25 subcomplex. Contacts the 5S rRNA and the P site tRNA. Forms a bridge to the 30S subunit in the 70S ribosome.

This is one of the proteins that bind and probably mediate the attachment of the 5S RNA into the large ribosomal subunit, where it forms part of the central protuberance. In the 70S ribosome it contacts protein S13 of the 30S subunit (bridge B1b), connecting the 2 subunits; this bridge is implicated in subunit movement. Contacts the P site tRNA; the 5S rRNA and some of its associated proteins might help stabilize positioning of ribosome-bound tRNAs. The protein is Large ribosomal subunit protein uL5 of Rippkaea orientalis (strain PCC 8801 / RF-1) (Cyanothece sp. (strain PCC 8801)).